The sequence spans 387 residues: Pepsin A (387 aa).

The first 15 residues, 1–15 (MKWLLLLSLVALSEC), serve as a signal peptide directing secretion. The propeptide at 16 to 61 (LYKVSLIKKKSLRKNLIEHGLLKDFLKNNTLDPASKYFPQGEAATM) is activation peptide. The 310-residue stretch at 75 to 384 (YFGTIGIGTP…DRANNQVGLA (310 aa)) folds into the Peptidase A1 domain. Asp-93 is an active-site residue. Cys-106 and Cys-111 are disulfide-bonded. Ser-129 carries the phosphoserine modification. Cys-267 and Cys-271 are disulfide-bonded. The active site involves Asp-276. Cys-310 and Cys-343 form a disulfide bridge.

This sequence belongs to the peptidase A1 family.

The protein localises to the secreted. It catalyses the reaction Preferential cleavage: hydrophobic, preferably aromatic, residues in P1 and P1' positions. Cleaves 1-Phe-|-Val-2, 4-Gln-|-His-5, 13-Glu-|-Ala-14, 14-Ala-|-Leu-15, 15-Leu-|-Tyr-16, 16-Tyr-|-Leu-17, 23-Gly-|-Phe-24, 24-Phe-|-Phe-25 and 25-Phe-|-Tyr-26 bonds in the B chain of insulin.. With respect to regulation, inhibited by pepstatin. Functionally, shows particularly broad specificity; although bonds involving phenylalanine and leucine are preferred, many others are also cleaved to some extent. The protein is Pepsin A (PGA) of Callithrix jacchus (White-tufted-ear marmoset).